Consider the following 328-residue polypeptide: GMP reductase (328 aa).

The Thioimidate intermediate role is filled by C176. 205-228 (IIADGGIRTHGDIAKSIRFGASMI) lines the NADP(+) pocket.

Belongs to the IMPDH/GMPR family. GuaC type 2 subfamily.

The enzyme catalyses IMP + NH4(+) + NADP(+) = GMP + NADPH + 2 H(+). Its function is as follows. Catalyzes the irreversible NADPH-dependent deamination of GMP to IMP. It functions in the conversion of nucleobase, nucleoside and nucleotide derivatives of G to A nucleotides, and in maintaining the intracellular balance of A and G nucleotides. This Streptococcus pneumoniae serotype 2 (strain D39 / NCTC 7466) protein is GMP reductase.